A 344-amino-acid polypeptide reads, in one-letter code: NADH-ubiquinone oxidoreductase chain 2 (344 aa).

11 helical membrane passes run 1–21 (MNPLALTIFLLSLAIGTTITL), 24–44 (FHWLLAWIGLEINTLAIIPLM), 59–79 (YFLTQAAASALVLFSSLISAW), 94–114 (MNILSIALMMKLGLAPLHFWI), 121–141 (ISLPTGLILSTWQKIAPMALL), 150–170 (LNLTIALGLTSIMVGGWGGIG), 177–197 (IMAFSSIGHLGWIIVILKFDP), 201–221 (LLNFVLYIIMTAAMFMSLTTI), 245–265 (LILLSLAGLPPLTGFTPKLLI), 273–293 (NATLLAVMVMFISLLALFFYI), and 324–344 (TAIMNTMALILLPITPTLLLL).

Belongs to the complex I subunit 2 family.

It localises to the mitochondrion inner membrane. The catalysed reaction is a ubiquinone + NADH + 5 H(+)(in) = a ubiquinol + NAD(+) + 4 H(+)(out). Its function is as follows. Core subunit of the mitochondrial membrane respiratory chain NADH dehydrogenase (Complex I) that is believed to belong to the minimal assembly required for catalysis. Complex I functions in the transfer of electrons from NADH to the respiratory chain. The immediate electron acceptor for the enzyme is believed to be ubiquinone. The protein is NADH-ubiquinone oxidoreductase chain 2 (MT-ND2) of Aquarana catesbeiana (American bullfrog).